A 275-amino-acid chain; its full sequence is MVIKLYKNYAPSTHNGTLKGQVKSARGKNLISGKHRCGKGRNARGIITARHRGGGHKRLYRKIDFWRNKKNIYGRIVTIEYDPNRNAHICLIHYRNGEKRYILHPRGAIIGDTIVSGTEVSIKIGNALPLTEMPLGTAIHNLEITRGKGGQLARAAGAVAKLIAKEGKSATLKLPSGEVRLISKSCSATVGQVGNVGVNQKSLGRAGAQRWLGKRPVVRGVVMNPVDHPHGGGEGRAPIGRKKPTTPWGYPALGRKTRKVNKYSEKFIIRHRRKQ.

Residues 225 to 249 (PVDHPHGGGEGRAPIGRKKPTTPWG) form a disordered region.

It belongs to the universal ribosomal protein uL2 family. Part of the 50S ribosomal subunit.

It localises to the plastid. This chain is Large ribosomal subunit protein uL2c (rpl2), found in Cuscuta reflexa (Southern Asian dodder).